The sequence spans 630 residues: Heat shock cognate 70 kDa protein 3 (630 aa).

Positions 611 to 630 (FYQGNNNPKPTTTTFNQDLD) are disordered. The span at 615-630 (NNNPKPTTTTFNQDLD) shows a compositional bias: low complexity.

This sequence belongs to the heat shock protein 70 family.

In terms of biological role, may function in protein folding and assembly, and disassembly of protein complexes. This chain is Heat shock cognate 70 kDa protein 3, found in Dictyostelium discoideum (Social amoeba).